Here is a 212-residue protein sequence, read N- to C-terminus: uncharacterized protein (212 aa).

This is an uncharacterized protein from Acanthamoeba polyphaga (Amoeba).